A 283-amino-acid polypeptide reads, in one-letter code: Trafficking protein particle complex subunit 31 (283 aa).

Polar residues predominate over residues 1–16; sequence MSQRIIQPSASDQQFP. 2 disordered regions span residues 1-20 and 126-156; these read MSQR…GKSD and SSKL…RLQE. The segment covering 126–151 has biased composition (low complexity); it reads SSKLSNASNSPGMLANSSTATSASAN.

Belongs to the TRAPP small subunits family. BET3 subfamily. Part of the multisubunit TRAPP (transport protein particle) I complex composed of BET3, BET5, TRS20, TRS23, TRS31 and TRS33. Part of the multisubunit TRAPP (transport protein particle) II complex composed of BET3, BET5, TRS20, TRS23, TRS31, TRS33, TRS65, TRS85, TRS120 and TRS130. Part of the multisubunit TRAPP (transport protein particle) III complex composed of BET3, BET5, TRS20, TRS23, TRS31, TRS33 and TRS85.

It localises to the golgi apparatus. The protein localises to the cis-Golgi network. It is found in the endoplasmic reticulum. The protein resides in the preautophagosomal structure. In terms of biological role, component of the TRAPP I, TRAPP II and TRAPP III complexes which act as guanine nucleotide exchange factors (GEF) for YPT1. TRAPP I plays a key role in the late stages of endoplasmic reticulum to Golgi traffic. TRAPP II plays a role in intra-Golgi transport. TRAPP III plays a role in autophagosome formation. The protein is Trafficking protein particle complex subunit 31 (TRS31) of Saccharomyces cerevisiae (strain ATCC 204508 / S288c) (Baker's yeast).